Reading from the N-terminus, the 463-residue chain is MENSLKSSGKPLAAPKVGMVSLGCPKALVDSEQIITQLRAEGYEISGTYDGADLVVVNTCGFIDEAVQESLDAIGEALAENGKVIVTGCLGAKKSASGSGLIAEVHPKVLAVTGPHAVGEVMQAVHSHLPKPHDPFVDLVPAAGIKLTPRHYAYLKISEGCNHRCSFCIIPSMRGELVSRPVAEVMLEAENLFKSGVKELLVISQDTSAYGVDVKYRTGFWNGRPLKTRMTELVGALGELAAQYGAWVRLHYVYPYPHVDEIIPMMAQGPLKGHVLPYLDVPFQHAHPEVLKRMKRLANAERVLERVQKWREICPDLTIRSTFIAGFPGETDAQFETLLDFIREAELDRVGCFAYSPVEGASANALDGALPDDVREARRARFMEVAEEVSAARIARKIGKTLKVLIDEVNAEGGIGRTAADAPEIDGVVYVEPAAKASKRYKVGEFVSVKITGADGHDLWGEV.

Positions 15 to 130 (PKVGMVSLGC…VMQAVHSHLP (116 aa)) constitute an MTTase N-terminal domain. Positions 24, 60, 89, 161, 165, and 168 each coordinate [4Fe-4S] cluster. The region spanning 147–392 (LTPRHYAYLK…MEVAEEVSAA (246 aa)) is the Radical SAM core domain. Residues 395–463 (ARKIGKTLKV…ADGHDLWGEV (69 aa)) form the TRAM domain.

This sequence belongs to the methylthiotransferase family. RimO subfamily. [4Fe-4S] cluster serves as cofactor.

Its subcellular location is the cytoplasm. The enzyme catalyses L-aspartate(89)-[ribosomal protein uS12]-hydrogen + (sulfur carrier)-SH + AH2 + 2 S-adenosyl-L-methionine = 3-methylsulfanyl-L-aspartate(89)-[ribosomal protein uS12]-hydrogen + (sulfur carrier)-H + 5'-deoxyadenosine + L-methionine + A + S-adenosyl-L-homocysteine + 2 H(+). In terms of biological role, catalyzes the methylthiolation of an aspartic acid residue of ribosomal protein uS12. This Burkholderia mallei (strain NCTC 10229) protein is Ribosomal protein uS12 methylthiotransferase RimO.